A 433-amino-acid chain; its full sequence is Phosphomethylpyrimidine synthase (433 aa).

Substrate-binding positions include Asn-66, Met-94, Tyr-123, His-162, 184–186, 225–228, and Glu-264; these read SRG and DALR. His-268 contributes to the Zn(2+) binding site. Substrate is bound at residue Tyr-291. His-332 contributes to the Zn(2+) binding site. Positions 408, 411, and 415 each coordinate [4Fe-4S] cluster.

The protein belongs to the ThiC family. Requires [4Fe-4S] cluster as cofactor.

The catalysed reaction is 5-amino-1-(5-phospho-beta-D-ribosyl)imidazole + S-adenosyl-L-methionine = 4-amino-2-methyl-5-(phosphooxymethyl)pyrimidine + CO + 5'-deoxyadenosine + formate + L-methionine + 3 H(+). Its pathway is cofactor biosynthesis; thiamine diphosphate biosynthesis. Catalyzes the synthesis of the hydroxymethylpyrimidine phosphate (HMP-P) moiety of thiamine from aminoimidazole ribotide (AIR) in a radical S-adenosyl-L-methionine (SAM)-dependent reaction. The protein is Phosphomethylpyrimidine synthase of Saccharolobus islandicus (strain M.14.25 / Kamchatka #1) (Sulfolobus islandicus).